A 196-amino-acid polypeptide reads, in one-letter code: ATP-dependent Clp protease proteolytic subunit (196 aa).

Ser99 (nucleophile) is an active-site residue. His124 is a catalytic residue.

It belongs to the peptidase S14 family. In terms of assembly, fourteen ClpP subunits assemble into 2 heptameric rings which stack back to back to give a disk-like structure with a central cavity, resembling the structure of eukaryotic proteasomes.

It is found in the cytoplasm. It catalyses the reaction Hydrolysis of proteins to small peptides in the presence of ATP and magnesium. alpha-casein is the usual test substrate. In the absence of ATP, only oligopeptides shorter than five residues are hydrolyzed (such as succinyl-Leu-Tyr-|-NHMec, and Leu-Tyr-Leu-|-Tyr-Trp, in which cleavage of the -Tyr-|-Leu- and -Tyr-|-Trp bonds also occurs).. In terms of biological role, cleaves peptides in various proteins in a process that requires ATP hydrolysis. Has a chymotrypsin-like activity. Plays a major role in the degradation of misfolded proteins. The protein is ATP-dependent Clp protease proteolytic subunit of Helicobacter hepaticus (strain ATCC 51449 / 3B1).